Here is a 148-residue protein sequence, read N- to C-terminus: D-aminoacyl-tRNA deacylase (148 aa).

The Gly-cisPro motif, important for rejection of L-amino acids signature appears at 136–137; that stretch reads GP.

It belongs to the DTD family. In terms of assembly, homodimer.

It localises to the cytoplasm. It carries out the reaction glycyl-tRNA(Ala) + H2O = tRNA(Ala) + glycine + H(+). The enzyme catalyses a D-aminoacyl-tRNA + H2O = a tRNA + a D-alpha-amino acid + H(+). Functionally, an aminoacyl-tRNA editing enzyme that deacylates mischarged D-aminoacyl-tRNAs. Also deacylates mischarged glycyl-tRNA(Ala), protecting cells against glycine mischarging by AlaRS. Acts via tRNA-based rather than protein-based catalysis; rejects L-amino acids rather than detecting D-amino acids in the active site. By recycling D-aminoacyl-tRNA to D-amino acids and free tRNA molecules, this enzyme counteracts the toxicity associated with the formation of D-aminoacyl-tRNA entities in vivo and helps enforce protein L-homochirality. The chain is D-aminoacyl-tRNA deacylase from Kosmotoga olearia (strain ATCC BAA-1733 / DSM 21960 / TBF 19.5.1).